A 689-amino-acid polypeptide reads, in one-letter code: Methionine--tRNA ligase (689 aa).

The short motif at 13–23 (PYANGNFHIGH) is the 'HIGH' region element. Residues Cys-144, Cys-147, Cys-157, and Cys-160 each contribute to the Zn(2+) site. The 'KMSKS' region signature appears at 341–345 (KMSKS). Lys-344 is an ATP binding site. The 107-residue stretch at 583-689 (DFAKVDLRIA…PGASPGLRVR (107 aa)) folds into the tRNA-binding domain.

This sequence belongs to the class-I aminoacyl-tRNA synthetase family. MetG type 1 subfamily. Homodimer. The cofactor is Zn(2+).

It is found in the cytoplasm. The catalysed reaction is tRNA(Met) + L-methionine + ATP = L-methionyl-tRNA(Met) + AMP + diphosphate. In terms of biological role, is required not only for elongation of protein synthesis but also for the initiation of all mRNA translation through initiator tRNA(fMet) aminoacylation. The chain is Methionine--tRNA ligase from Polaromonas sp. (strain JS666 / ATCC BAA-500).